The following is a 363-amino-acid chain: 3-dehydroquinate synthase (363 aa).

Residues 72-77, 130-131, lysine 142, and lysine 151 each bind NAD(+); these read SGEKEK and TT. Zn(2+) is bound by residues glutamate 184, histidine 247, and histidine 264.

The protein belongs to the sugar phosphate cyclases superfamily. Dehydroquinate synthase family. Requires Co(2+) as cofactor. Zn(2+) is required as a cofactor. It depends on NAD(+) as a cofactor.

It localises to the cytoplasm. It carries out the reaction 7-phospho-2-dehydro-3-deoxy-D-arabino-heptonate = 3-dehydroquinate + phosphate. The protein operates within metabolic intermediate biosynthesis; chorismate biosynthesis; chorismate from D-erythrose 4-phosphate and phosphoenolpyruvate: step 2/7. Functionally, catalyzes the conversion of 3-deoxy-D-arabino-heptulosonate 7-phosphate (DAHP) to dehydroquinate (DHQ). This is 3-dehydroquinate synthase from Bacillus anthracis (strain A0248).